A 417-amino-acid chain; its full sequence is Serine hydroxymethyltransferase (417 aa).

(6S)-5,6,7,8-tetrahydrofolate is bound by residues Leu121 and 125–127; that span reads GHL. Lys229 carries the post-translational modification N6-(pyridoxal phosphate)lysine. 355 to 357 is a (6S)-5,6,7,8-tetrahydrofolate binding site; that stretch reads SPF.

Belongs to the SHMT family. As to quaternary structure, homodimer. It depends on pyridoxal 5'-phosphate as a cofactor.

It is found in the cytoplasm. It catalyses the reaction (6R)-5,10-methylene-5,6,7,8-tetrahydrofolate + glycine + H2O = (6S)-5,6,7,8-tetrahydrofolate + L-serine. It functions in the pathway one-carbon metabolism; tetrahydrofolate interconversion. Its pathway is amino-acid biosynthesis; glycine biosynthesis; glycine from L-serine: step 1/1. Its function is as follows. Catalyzes the reversible interconversion of serine and glycine with tetrahydrofolate (THF) serving as the one-carbon carrier. This reaction serves as the major source of one-carbon groups required for the biosynthesis of purines, thymidylate, methionine, and other important biomolecules. Also exhibits THF-independent aldolase activity toward beta-hydroxyamino acids, producing glycine and aldehydes, via a retro-aldol mechanism. The sequence is that of Serine hydroxymethyltransferase from Xanthomonas axonopodis pv. citri (strain 306).